A 76-amino-acid polypeptide reads, in one-letter code: MDADKVKEEPQSVWEKAKPMFTNKPASGYYDPCQDFADRSIKCMRRNGNDKTMCSDYFQAYRDCKKEWTTQRKNKS.

The region spanning 30-72 is the CHCH domain; that stretch reads YDPCQDFADRSIKCMRRNGNDKTMCSDYFQAYRDCKKEWTTQR. 2 short sequence motifs (cx9C motif) span residues 33-43 and 54-64; these read CQDFADRSIKC and CSDYFQAYRDC. 2 cysteine pairs are disulfide-bonded: C33-C64 and C43-C54.

It localises to the mitochondrion intermembrane space. Functionally, required for the assembly of cytochrome c oxidase. In Paracoccidioides brasiliensis, this protein is Cytochrome c oxidase-assembly factor COX23, mitochondrial (COX23).